The following is a 431-amino-acid chain: Gamma-glutamyl phosphate reductase (431 aa).

It belongs to the gamma-glutamyl phosphate reductase family.

Its subcellular location is the cytoplasm. The catalysed reaction is L-glutamate 5-semialdehyde + phosphate + NADP(+) = L-glutamyl 5-phosphate + NADPH + H(+). Its pathway is amino-acid biosynthesis; L-proline biosynthesis; L-glutamate 5-semialdehyde from L-glutamate: step 2/2. Functionally, catalyzes the NADPH-dependent reduction of L-glutamate 5-phosphate into L-glutamate 5-semialdehyde and phosphate. The product spontaneously undergoes cyclization to form 1-pyrroline-5-carboxylate. The chain is Gamma-glutamyl phosphate reductase from Acaryochloris marina (strain MBIC 11017).